Consider the following 341-residue polypeptide: L-threonine 3-dehydrogenase (341 aa).

C38 contributes to the Zn(2+) binding site. Active-site charge relay system residues include T40 and H43. Zn(2+)-binding residues include H63, E64, C93, C96, C99, and C107. NAD(+) is bound by residues I175, D195, R200, 262-264 (LGI), and 286-287 (IY).

It belongs to the zinc-containing alcohol dehydrogenase family. Homotetramer. The cofactor is Zn(2+).

It localises to the cytoplasm. The enzyme catalyses L-threonine + NAD(+) = (2S)-2-amino-3-oxobutanoate + NADH + H(+). The protein operates within amino-acid degradation; L-threonine degradation via oxydo-reductase pathway; glycine from L-threonine: step 1/2. Its function is as follows. Catalyzes the NAD(+)-dependent oxidation of L-threonine to 2-amino-3-ketobutyrate. The protein is L-threonine 3-dehydrogenase of Shigella sonnei (strain Ss046).